The following is a 190-amino-acid chain: 6,7-dimethyl-8-ribityllumazine synthase (190 aa).

Residues phenylalanine 23, serine 61–glutamate 63, and alanine 85–isoleucine 87 contribute to the 5-amino-6-(D-ribitylamino)uracil site. Glutamine 90–threonine 91 contacts (2S)-2-hydroxy-3-oxobutyl phosphate. The active-site Proton donor is histidine 93. Phenylalanine 118 is a binding site for 5-amino-6-(D-ribitylamino)uracil. Residue arginine 132 participates in (2S)-2-hydroxy-3-oxobutyl phosphate binding.

The protein belongs to the DMRL synthase family.

It catalyses the reaction (2S)-2-hydroxy-3-oxobutyl phosphate + 5-amino-6-(D-ribitylamino)uracil = 6,7-dimethyl-8-(1-D-ribityl)lumazine + phosphate + 2 H2O + H(+). The protein operates within cofactor biosynthesis; riboflavin biosynthesis; riboflavin from 2-hydroxy-3-oxobutyl phosphate and 5-amino-6-(D-ribitylamino)uracil: step 1/2. In terms of biological role, catalyzes the formation of 6,7-dimethyl-8-ribityllumazine by condensation of 5-amino-6-(D-ribitylamino)uracil with 3,4-dihydroxy-2-butanone 4-phosphate. This is the penultimate step in the biosynthesis of riboflavin. This is 6,7-dimethyl-8-ribityllumazine synthase from Nostoc sp. (strain PCC 7120 / SAG 25.82 / UTEX 2576).